A 90-amino-acid chain; its full sequence is Small ribosomal subunit protein bS6 (90 aa).

Lys-33 participates in a covalent cross-link: Isoglutamyl lysine isopeptide (Lys-Gln) (interchain with Q-Cter in protein Pup).

It belongs to the bacterial ribosomal protein bS6 family.

Binds together with bS18 to 16S ribosomal RNA. The protein is Small ribosomal subunit protein bS6 (rpsF) of Mycolicibacterium smegmatis (strain ATCC 700084 / mc(2)155) (Mycobacterium smegmatis).